Reading from the N-terminus, the 279-residue chain is Movement protein (279 aa).

Residues 256–266 (PPIAIGSPSAS) are compositionally biased toward low complexity. Residues 256 to 279 (PPIAIGSPSASRNNSFRSQVVNGL) form a disordered region. Positions 267 to 279 (RNNSFRSQVVNGL) are enriched in polar residues.

The protein belongs to the cucumovirus movement protein family.

The protein resides in the host cell junction. It is found in the host plasmodesma. Functionally, transports viral genome to neighboring plant cells directly through plasmosdesmata, without any budding. The movement protein allows efficient cell to cell propagation, by bypassing the host cell wall barrier. Acts by forming a tubular structure at the host plasmodesmata, enlarging it enough to allow free passage of virion capsids. The protein is Movement protein of Cucumis sativus (Cucumber).